Reading from the N-terminus, the 634-residue chain is Kelch-like protein 22 (634 aa).

N-acetylalanine is present on alanine 2. A BTB domain is found at 50-117 (FDVVLVVEGR…IYTSELELSL (68 aa)). 6 Kelch repeats span residues 299–349 (CVVG…VLNN), 350–399 (FVYL…VVGR), 400–446 (YIYA…TLEG), 448–493 (MYVT…TLLD), 494–544 (KLYV…VLDT), and 545–593 (RIYV…VLTL). Phosphothreonine is present on threonine 463. Position 466 is a phosphotyrosine (tyrosine 466). The disordered stretch occupies residues 600-634 (EPPRGTPDRSQADPDFASEVMSVSDWEEFDNSSED). Threonine 605 is modified (phosphothreonine). Over residues 624–634 (DWEEFDNSSED) the composition is skewed to acidic residues.

As to quaternary structure, component of the BCR(KLHL22) E3 ubiquitin ligase complex, at least composed of CUL3, KLHL22 and RBX1. Interacts with PLK1. Interacts with DEPDC5 (via DEP domain); the interaction depends on amino acid availability. Interacts with YWHAE; required for the nuclear localization of KLHL22 upon amino acid starvation.

Its subcellular location is the cytoplasm. The protein localises to the cytosol. It is found in the cytoskeleton. The protein resides in the microtubule organizing center. It localises to the centrosome. Its subcellular location is the spindle. The protein localises to the nucleus. It is found in the lysosome. Its pathway is protein modification; protein ubiquitination. Its function is as follows. Substrate-specific adapter of a BCR (BTB-CUL3-RBX1) E3 ubiquitin ligase complex required for chromosome alignment and localization of PLK1 at kinetochores. The BCR(KLHL22) ubiquitin ligase complex mediates monoubiquitination of PLK1, leading to PLK1 dissociation from phosphoreceptor proteins and subsequent removal from kinetochores, allowing silencing of the spindle assembly checkpoint (SAC) and chromosome segregation. Monoubiquitination of PLK1 does not lead to PLK1 degradation. The BCR(KLHL22) ubiquitin ligase complex is also responsible for the amino acid-stimulated 'Lys-48' polyubiquitination and proteasomal degradation of DEPDC5. Through the degradation of DEPDC5, releases the GATOR1 complex-mediated inhibition of the TORC1 pathway. It is therefore an amino acid-dependent activator within the amino acid-sensing branch of the TORC1 pathway, indirectly regulating different cellular processes including cell growth and autophagy. The chain is Kelch-like protein 22 (KLHL22) from Ailuropoda melanoleuca (Giant panda).